A 449-amino-acid polypeptide reads, in one-letter code: uncharacterized protein (449 aa).

Transmembrane regions (helical) follow at residues 1 to 21, 26 to 46, 51 to 71, 97 to 117, 137 to 157, 178 to 198, 223 to 243, 244 to 264, 285 to 305, 310 to 330, 340 to 360, 377 to 397, and 425 to 445; these read MVANLPALFSLGVFVGVILLI, IHLTIAAFLGALILVFTHVIT, IDYISQSYATLALFFGVMVLV, LLMLGVIAITTPICAVLPNAT, FVPILILMVFVANSAGLLTLV, FKLSFMGVLAIVSIVVITPFL, VLMAGGVIITLVLIFFVIGES, LPVPIPPASVALMGACLALLL, LIFFMSIFVIIGSLEKTGVTA, LLAVVVGQNIAFGAIVLVFTV, IPLVVAMVPLLKQYVVNIGFA, VLPLFYAMMFGATLGGNGTLV, and GLPVMAVQLVVAALFVAWLMF.

The protein belongs to the CitM (TC 2.A.11) transporter family.

It is found in the cell membrane. This is an uncharacterized protein from Synechocystis sp. (strain ATCC 27184 / PCC 6803 / Kazusa).